The sequence spans 259 residues: Polycomb group RING finger protein 1 (259 aa).

The RING-type zinc finger occupies 45–84 (CYLCAGYFIDATTITECLHTFCKSCIVKYLQTSKYCPLCN).

As to quaternary structure, component of a PRC1-like complex.

It is found in the nucleus. Functionally, component of a Polycomb group (PcG) multiprotein PRC1-like complex, a complex class required to maintain the transcriptionally repressive state of many genes, including Hox genes, throughout development. PcG PRC1 complex acts via chromatin remodeling and modification of histones; it mediates monoubiquitination of histone H2A 'Lys-119', rendering chromatin heritably changed in its expressibility. In Xenopus tropicalis (Western clawed frog), this protein is Polycomb group RING finger protein 1 (pcgf1).